The primary structure comprises 213 residues: Thymidylate kinase (213 aa).

An ATP-binding site is contributed by 11 to 18; it reads GPEGAGKT.

Belongs to the thymidylate kinase family.

The enzyme catalyses dTMP + ATP = dTDP + ADP. Phosphorylation of dTMP to form dTDP in both de novo and salvage pathways of dTTP synthesis. The polypeptide is Thymidylate kinase (Leuconostoc mesenteroides subsp. mesenteroides (strain ATCC 8293 / DSM 20343 / BCRC 11652 / CCM 1803 / JCM 6124 / NCDO 523 / NBRC 100496 / NCIMB 8023 / NCTC 12954 / NRRL B-1118 / 37Y)).